The primary structure comprises 34 residues: MSDIN-like toxin proprotein 3 (34 aa).

Positions 1-10 (MSDINVIRAP) are excised as a propeptide. Residues 11–18 (LLILSILP) constitute a cross-link (cyclopeptide (Leu-Pro)). A propeptide spanning residues 19-34 (CVGDDIEVLRRGEGLS) is cleaved from the precursor.

The protein belongs to the MSDIN fungal toxin family. In terms of processing, processed by the macrocyclase-peptidase enzyme POPB to yield a toxic cyclic octapeptide. POPB first removes 10 residues from the N-terminus. Conformational trapping of the remaining peptide forces the enzyme to release this intermediate rather than proceed to macrocyclization. The enzyme rebinds the remaining peptide in a different conformation and catalyzes macrocyclization of the N-terminal 8 residues. In terms of tissue distribution, expressed in basidiocarps.

Its function is as follows. Probable toxin that belongs to the MSDIN-like toxin family responsible for a large number of food poisoning cases and deaths. In Amanita exitialis (Guangzhou destroying angel), this protein is MSDIN-like toxin proprotein 3.